The chain runs to 341 residues: MKALSKLKAEEGIWMTDVPQPELGHNDIMIKIRKTAICGTDVHIYNWDEWSQKTIPVPMVVGHEYVGEVVAIGQEVKGFNIGDRVSGEGHITCGHCRNCRGGRTHLCRNTVGVGVNRPGSFAEYLVIPAFNAFKIPDNISDELAAIFDPFGNAVHTALSFDLVGEDVLVSGAGPIGIMAAAVCKHVGARHVVIADVNEYRLDLARKMGVTRAVNVSKENLNDVMTELGMTEGFDVGLEMSGAPPAFRSLLNSMNHGGRIAMLGIPPSDMSIDWNQVIFKGLFIKGIYGREMFETWYKMAALIQSGLDLTPIITHRFPIDEFQQGFDAMRSGKSGKVVLSWD.

Cysteine 38 is a Zn(2+) binding site. Active-site charge relay system residues include threonine 40 and histidine 43. Zn(2+) contacts are provided by histidine 63, glutamate 64, cysteine 93, cysteine 96, cysteine 99, and cysteine 107. NAD(+) is bound by residues isoleucine 175, aspartate 195, arginine 200, 262 to 264, and 286 to 287; these read LGI and IY.

It belongs to the zinc-containing alcohol dehydrogenase family. As to quaternary structure, homotetramer. The cofactor is Zn(2+).

It localises to the cytoplasm. It carries out the reaction L-threonine + NAD(+) = (2S)-2-amino-3-oxobutanoate + NADH + H(+). It functions in the pathway amino-acid degradation; L-threonine degradation via oxydo-reductase pathway; glycine from L-threonine: step 1/2. Catalyzes the NAD(+)-dependent oxidation of L-threonine to 2-amino-3-ketobutyrate. This chain is L-threonine 3-dehydrogenase, found in Yersinia pestis bv. Antiqua (strain Antiqua).